We begin with the raw amino-acid sequence, 638 residues long: Chaperone protein DnaK (638 aa).

T198 carries the post-translational modification Phosphothreonine; by autocatalysis. A compositionally biased stretch (low complexity) spans Q603 to Q618. The disordered stretch occupies residues Q603–K638. Positions D624–K638 are enriched in acidic residues.

Belongs to the heat shock protein 70 family.

Its function is as follows. Acts as a chaperone. The protein is Chaperone protein DnaK of Vibrio campbellii (strain ATCC BAA-1116).